The chain runs to 501 residues: NADH-quinone oxidoreductase subunit N (501 aa).

14 helical membrane passes run 4 to 24 (HLPILIVIIPLFVAMAARLLV), 34 to 54 (FVLAAALAVLASGAVALAETL), 80 to 100 (LAGGLIVLVAFFGLAALVYAG), 112 to 132 (GSFYALFLLAKAGLLGMCATG), 134 to 154 (LFNLYVFLEISSLAAYALIAF), 167 to 187 (LIIGTAAACFYLLGVGYLYAM), 207 to 227 (PVVILALVFIVAGLGIKMALF), 241 to 261 (PAPVLAFMAAVMTKVSAYALY), 278 to 298 (LQVLGWMAAAGILFGSIMAIA), 314 to 334 (VGYIVLGLAVGNVLALYGALL), 335 to 355 (HVLSHALVKGGLFFIAGGVSW), 376 to 396 (MGAFVAAALSMIGLPPTLGFF), 409 to 429 (GAWVFVAVLVVSSLLTAVYFF), and 463 to 483 (PASMLVPILVLGIGVVVLGLF).

The protein belongs to the complex I subunit 2 family. NDH-1 is composed of 14 different subunits. Subunits NuoA, H, J, K, L, M, N constitute the membrane sector of the complex.

It localises to the cell membrane. It carries out the reaction a quinone + NADH + 5 H(+)(in) = a quinol + NAD(+) + 4 H(+)(out). In terms of biological role, NDH-1 shuttles electrons from NADH, via FMN and iron-sulfur (Fe-S) centers, to quinones in the respiratory chain. The immediate electron acceptor for the enzyme in this species is believed to be a menaquinone. Couples the redox reaction to proton translocation (for every two electrons transferred, four hydrogen ions are translocated across the cytoplasmic membrane), and thus conserves the redox energy in a proton gradient. This is NADH-quinone oxidoreductase subunit N from Desulforudis audaxviator (strain MP104C).